The following is a 130-amino-acid chain: Fumarate reductase subunit C (130 aa).

3 helical membrane-spanning segments follow: residues 33-53, 60-80, and 109-129; these read AVTTMWFSILLIYGLFALKGG, FVTFLQNPVILLVNIITLLGA, and VIKLLWAVTIIVTMIILGIAL.

Belongs to the FrdC family. As to quaternary structure, part of an enzyme complex containing four subunits: a flavoprotein (FrdA), an iron-sulfur protein (FrdB), and two hydrophobic anchor proteins (FrdC and FrdD).

It localises to the cell inner membrane. Its function is as follows. Two distinct, membrane-bound, FAD-containing enzymes are responsible for the catalysis of fumarate and succinate interconversion; fumarate reductase is used in anaerobic growth, and succinate dehydrogenase is used in aerobic growth. Anchors the catalytic components of the fumarate reductase complex to the cell inner membrane, binds quinones. This is Fumarate reductase subunit C from Photorhabdus laumondii subsp. laumondii (strain DSM 15139 / CIP 105565 / TT01) (Photorhabdus luminescens subsp. laumondii).